We begin with the raw amino-acid sequence, 626 residues long: Probable potassium transport system protein Kup (626 aa).

12 consecutive transmembrane segments (helical) span residues 13 to 33 (VALM…SPLY), 53 to 73 (VLSI…VLLI), 102 to 122 (FFVV…MITP), 138 to 158 (HTLD…LFAI), 169 to 189 (LFGP…GWQV), 207 to 227 (FVFE…LALT), 248 to 268 (WFSM…ALLL), 277 to 297 (PFFL…ATVA), 338 to 358 (IYLP…VITF), 367 to 387 (AYGF…FAVL), 399 to 419 (WMLV…ANIF), and 421 to 441 (IHEG…LMMT).

Belongs to the HAK/KUP transporter (TC 2.A.72) family.

The protein resides in the cell inner membrane. It carries out the reaction K(+)(in) + H(+)(in) = K(+)(out) + H(+)(out). In terms of biological role, transport of potassium into the cell. Likely operates as a K(+):H(+) symporter. This Bordetella avium (strain 197N) protein is Probable potassium transport system protein Kup.